A 357-amino-acid chain; its full sequence is Probable nitronate monooxygenase (357 aa).

FMN contacts are provided by residues Asn71, Gln175, Gly180, Gly219, and 238–241; that span reads QMGT.

This sequence belongs to the nitronate monooxygenase family. NMO class I subfamily. It depends on FMN as a cofactor.

It carries out the reaction 3 propionate 3-nitronate + 3 O2 + H2O = 3 3-oxopropanoate + 2 nitrate + nitrite + H2O2 + 3 H(+). Its function is as follows. Nitronate monooxygenase that uses molecular oxygen to catalyze the oxidative denitrification of alkyl nitronates. Acts on propionate 3-nitronate (P3N), the presumed physiological substrate. Probably functions in the detoxification of P3N, a metabolic poison produced by plants and fungi as a defense mechanism. This Staphylococcus haemolyticus (strain JCSC1435) protein is Probable nitronate monooxygenase.